Here is a 48-residue protein sequence, read N- to C-terminus: DNA gyrase inhibitor YacG (48 aa).

Zn(2+) is bound by residues cysteine 9, cysteine 12, cysteine 28, and cysteine 32.

The protein belongs to the DNA gyrase inhibitor YacG family. Interacts with GyrB. Zn(2+) serves as cofactor.

In terms of biological role, inhibits all the catalytic activities of DNA gyrase by preventing its interaction with DNA. Acts by binding directly to the C-terminal domain of GyrB, which probably disrupts DNA binding by the gyrase. The protein is DNA gyrase inhibitor YacG of Wigglesworthia glossinidia brevipalpis.